The chain runs to 351 residues: Lipoyl synthase, mitochondrial (351 aa).

[4Fe-4S] cluster is bound by residues C84, C89, C95, C115, C119, C122, and S330. The region spanning 100–319 (DKSKATATIM…QKRAMDMGFL (220 aa)) is the Radical SAM core domain.

Belongs to the radical SAM superfamily. Lipoyl synthase family. Requires [4Fe-4S] cluster as cofactor.

Its subcellular location is the mitochondrion. The enzyme catalyses [[Fe-S] cluster scaffold protein carrying a second [4Fe-4S](2+) cluster] + N(6)-octanoyl-L-lysyl-[protein] + 2 oxidized [2Fe-2S]-[ferredoxin] + 2 S-adenosyl-L-methionine + 4 H(+) = [[Fe-S] cluster scaffold protein] + N(6)-[(R)-dihydrolipoyl]-L-lysyl-[protein] + 4 Fe(3+) + 2 hydrogen sulfide + 2 5'-deoxyadenosine + 2 L-methionine + 2 reduced [2Fe-2S]-[ferredoxin]. The protein operates within protein modification; protein lipoylation via endogenous pathway; protein N(6)-(lipoyl)lysine from octanoyl-[acyl-carrier-protein]: step 2/2. Functionally, catalyzes the radical-mediated insertion of two sulfur atoms into the C-6 and C-8 positions of the octanoyl moiety bound to the lipoyl domains of lipoate-dependent enzymes, thereby converting the octanoylated domains into lipoylated derivatives. This chain is Lipoyl synthase, mitochondrial, found in Yarrowia lipolytica (strain CLIB 122 / E 150) (Yeast).